The primary structure comprises 900 residues: Nuclear factor NF-kappa-B p100 subunit (900 aa).

Phosphoserine is present on residues serine 23 and serine 161. Residues 38 to 343 enclose the RHD domain; that stretch reads PYLVIVEQPK…EVQRKRRKAL (306 aa). The Nuclear localization signal signature appears at 337–341; sequence RKRRK. The interval 346–377 is GRR; the sequence is FSQPFGGGSHMGGGSGGAAGGYGGAGGGGSLG. A disordered region spans residues 404 to 435; the sequence is GAQMAATVPSRDSGEEAAEPSAPSRTPQCEPQ. Position 429 is a phosphothreonine (threonine 429). ANK repeat units lie at residues 487-519, 526-555, 559-591, 599-628, 633-663, and 667-696; these read NGDTPLHLAIIHGQTSVIEQIVYVIHHAQDLGV, LHQTPLHLAVITGQTSVVSFLLRVGADPAL, HGDSAMHLALRAGAGAPELLRALLQSGAPAVPQ, EGLYPVHLAVRARSPECLDLLVDSGAEVEA, GGRTALHLATEMEELGLVTHLVTKLRANVNA, and AGNTPLHLAAGLGYPTLTRLLLKAGADIHA. The segment at 698 to 734 is disordered; it reads NEEPLCPLPSPPTSDSDSDSEGPEKDTRSSFRGHTPL. 3 positions are modified to phosphoserine: serine 713, serine 715, and serine 717. Residues 729–758 form an ANK 7 repeat; it reads RGHTPLDLTCSTKVKTLLLNAAQNTMEPPL. The 88-residue stretch at 764–851 folds into the Death domain; sequence AGPGLSLGDT…EGVRLLRGPE (88 aa). Serine 812 carries the post-translational modification Phosphoserine. Over residues 849-866 the composition is skewed to basic and acidic residues; sequence GPETRDKLPSTAEVKEDS. Residues 849 to 900 are disordered; the sequence is GPETRDKLPSTAEVKEDSAYGSQSVEQEAEKLGPPPEPPGGLCHGHPQPQVH. Lysine 855 participates in a covalent cross-link: Glycyl lysine isopeptide (Lys-Gly) (interchain with G-Cter in ubiquitin). Phosphoserine; by MAP3K14 occurs at positions 866 and 870. The span at 888–900 shows a compositional bias: low complexity; sequence GGLCHGHPQPQVH.

In terms of assembly, component of the NF-kappa-B RelB-p52 complex. Homodimer; component of the NF-kappa-B p52-p52 complex. Component of the NF-kappa-B p65-p52 complex. Component of the NF-kappa-B p52-c-Rel complex. NFKB2/p52 interacts with NFKBIE. Component of a complex consisting of the NF-kappa-B p50-p50 homodimer and BCL3. Directly interacts with MEN1. In terms of processing, while translation occurs, the particular unfolded structure after the GRR repeat promotes the generation of p52 making it an acceptable substrate for the proteasome. This process is known as cotranslational processing. The processed form is active and the unprocessed form acts as an inhibitor (I kappa B-like), being able to form cytosolic complexes with NF-kappa B, trapping it in the cytoplasm. Complete folding of the region downstream of the GRR repeat precludes processing. Post-translationally, subsequent to MAP3K14-dependent serine phosphorylation, p100 polyubiquitination occurs then triggering its proteasome-dependent processing. Constitutive processing is tightly suppressed by its C-terminal processing inhibitory domain, named PID, which contains the death domain. In terms of processing, ubiquitinated by TRIM55; leading to processing by VCP and subsequent ubiquitin-dependent protein degradation by the proteasome.

The protein localises to the nucleus. Its subcellular location is the cytoplasm. Its function is as follows. NF-kappa-B is a pleiotropic transcription factor present in almost all cell types and is the endpoint of a series of signal transduction events that are initiated by a vast array of stimuli related to many biological processes such as inflammation, immunity, differentiation, cell growth, tumorigenesis and apoptosis. NF-kappa-B is a homo- or heterodimeric complex formed by the Rel-like domain-containing proteins RELA/p65, RELB, NFKB1/p105, NFKB1/p50, REL and NFKB2/p52. The dimers bind at kappa-B sites in the DNA of their target genes and the individual dimers have distinct preferences for different kappa-B sites that they can bind with distinguishable affinity and specificity. Different dimer combinations act as transcriptional activators or repressors, respectively. NF-kappa-B is controlled by various mechanisms of post-translational modification and subcellular compartmentalization as well as by interactions with other cofactors or corepressors. NF-kappa-B complexes are held in the cytoplasm in an inactive state complexed with members of the NF-kappa-B inhibitor (I-kappa-B) family. In a conventional activation pathway, I-kappa-B is phosphorylated by I-kappa-B kinases (IKKs) in response to different activators, subsequently degraded thus liberating the active NF-kappa-B complex which translocates to the nucleus. In a non-canonical activation pathway, the MAP3K14-activated CHUK/IKKA homodimer phosphorylates NFKB2/p100 associated with RelB, inducing its proteolytic processing to NFKB2/p52 and the formation of NF-kappa-B RelB-p52 complexes. The NF-kappa-B heterodimeric RelB-p52 complex is a transcriptional activator. The NF-kappa-B p52-p52 homodimer is a transcriptional repressor. NFKB2 appears to have dual functions such as cytoplasmic retention of attached NF-kappa-B proteins by p100 and generation of p52 by a cotranslational processing. The proteasome-mediated process ensures the production of both p52 and p100 and preserves their independent function. p52 binds to the kappa-B consensus sequence 5'-GGRNNYYCC-3', located in the enhancer region of genes involved in immune response and acute phase reactions. p52 and p100 are respectively the minor and major form; the processing of p100 being relatively poor. Isoform p49 is a subunit of the NF-kappa-B protein complex, which stimulates the HIV enhancer in synergy with p65. In concert with RELB, regulates the circadian clock by repressing the transcriptional activator activity of the CLOCK-BMAL1 heterodimer. The sequence is that of Nuclear factor NF-kappa-B p100 subunit (NFKB2) from Homo sapiens (Human).